Here is an 86-residue protein sequence, read N- to C-terminus: MATKKAGGSSRNGRDSAGRRLGVKKSDGQYVIPGNIIVRQRGTKIHPGINVGLGKDHTIFSLIEGRVEFLTKQSHKIVNVKEIANV.

Positions 1 to 26 (MATKKAGGSSRNGRDSAGRRLGVKKS) are disordered.

It belongs to the bacterial ribosomal protein bL27 family.

This Rickettsia prowazekii (strain Madrid E) protein is Large ribosomal subunit protein bL27.